The chain runs to 258 residues: MHNDKGDRVVERLLLNCDMGESFGSWRMGLDAEVMPYIDCANIACGYHAGDPGIMRRTVTLALEHGVTIGAHPAYPDLVGFGRRSMACSPEEIRDLLHYQIGALDGICKVLGGRVAYVKPHGALYNDMMADPLKLRTVLEAVAAYDSNLPLMLMATADNRAAQALGDEIGVPLWFEAFADRAYTASGHLLSRRLPGAVHHDPARVVEQAVRLARGETLLADDGSALQLAARTLCVHGDNDSSVAAVRQIRQALDGLEV.

The protein belongs to the LamB/PxpA family. In terms of assembly, forms a complex composed of PxpA, PxpB and PxpC.

The catalysed reaction is 5-oxo-L-proline + ATP + 2 H2O = L-glutamate + ADP + phosphate + H(+). Catalyzes the cleavage of 5-oxoproline to form L-glutamate coupled to the hydrolysis of ATP to ADP and inorganic phosphate. The chain is 5-oxoprolinase subunit A 2 from Pseudomonas putida (strain ATCC 47054 / DSM 6125 / CFBP 8728 / NCIMB 11950 / KT2440).